Here is a 483-residue protein sequence, read N- to C-terminus: CBL-interacting serine/threonine-protein kinase 19 (483 aa).

The region spanning Y28–F282 is the Protein kinase domain. ATP contacts are provided by residues L34–V42 and K57. The active-site Proton acceptor is the D150. The segment at D168–E197 is activation loop. At S172 the chain carries Phosphoserine. T186 carries the post-translational modification Phosphothreonine. Residues S313 to S322 show a composition bias toward polar residues. The tract at residues S313–S338 is disordered. One can recognise an NAF domain in the interval P340–E364. Residues G367 to V396 form a PPI region. The tract at residues N459–D483 is disordered.

The protein belongs to the protein kinase superfamily. CAMK Ser/Thr protein kinase family. SNF1 subfamily. It depends on Mn(2+) as a cofactor.

It carries out the reaction L-seryl-[protein] + ATP = O-phospho-L-seryl-[protein] + ADP + H(+). The catalysed reaction is L-threonyl-[protein] + ATP = O-phospho-L-threonyl-[protein] + ADP + H(+). Its function is as follows. CIPK serine-threonine protein kinases interact with CBL proteins. Binding of a CBL protein to the regulatory NAF domain of CIPK protein lead to the activation of the kinase in a calcium-dependent manner. This chain is CBL-interacting serine/threonine-protein kinase 19 (CIPK19), found in Arabidopsis thaliana (Mouse-ear cress).